The sequence spans 364 residues: Mannose-1-phosphate guanyltransferase (364 aa).

This sequence belongs to the transferase hexapeptide repeat family.

Its subcellular location is the cytoplasm. The enzyme catalyses alpha-D-mannose 1-phosphate + GTP + H(+) = GDP-alpha-D-mannose + diphosphate. Its pathway is nucleotide-sugar biosynthesis; GDP-alpha-D-mannose biosynthesis; GDP-alpha-D-mannose from alpha-D-mannose 1-phosphate (GTP route): step 1/1. In terms of biological role, involved in cell wall synthesis where it is required for glycosylation. Involved in cell cycle progression through cell-size checkpoint. This Pichia angusta (Yeast) protein is Mannose-1-phosphate guanyltransferase (MPG1).